Consider the following 567-residue polypeptide: Oxygen-dependent choline dehydrogenase (567 aa).

FAD is bound at residue Asp-6–Glu-35. His-475 (proton acceptor) is an active-site residue.

This sequence belongs to the GMC oxidoreductase family. FAD serves as cofactor.

The enzyme catalyses choline + A = betaine aldehyde + AH2. It catalyses the reaction betaine aldehyde + NAD(+) + H2O = glycine betaine + NADH + 2 H(+). The protein operates within amine and polyamine biosynthesis; betaine biosynthesis via choline pathway; betaine aldehyde from choline (cytochrome c reductase route): step 1/1. Its function is as follows. Involved in the biosynthesis of the osmoprotectant glycine betaine. Catalyzes the oxidation of choline to betaine aldehyde and betaine aldehyde to glycine betaine at the same rate. This chain is Oxygen-dependent choline dehydrogenase, found in Pseudomonas fluorescens (strain SBW25).